We begin with the raw amino-acid sequence, 251 residues long: Ditrans,polycis-undecaprenyl-diphosphate synthase ((2E,6E)-farnesyl-diphosphate specific) (251 aa).

Residue D20 is part of the active site. D20 contributes to the Mg(2+) binding site. Substrate is bound by residues 21 to 24 (GNGR), W25, R33, H37, and 65 to 67 (SSE). N68 (proton acceptor) is an active-site residue. Substrate is bound by residues W69, R71, R188, and 194-196 (RIS). E207 lines the Mg(2+) pocket.

The protein belongs to the UPP synthase family. In terms of assembly, homodimer. Mg(2+) is required as a cofactor.

It carries out the reaction 8 isopentenyl diphosphate + (2E,6E)-farnesyl diphosphate = di-trans,octa-cis-undecaprenyl diphosphate + 8 diphosphate. Catalyzes the sequential condensation of isopentenyl diphosphate (IPP) with (2E,6E)-farnesyl diphosphate (E,E-FPP) to yield (2Z,6Z,10Z,14Z,18Z,22Z,26Z,30Z,34E,38E)-undecaprenyl diphosphate (di-trans,octa-cis-UPP). UPP is the precursor of glycosyl carrier lipid in the biosynthesis of bacterial cell wall polysaccharide components such as peptidoglycan and lipopolysaccharide. This Vibrio parahaemolyticus serotype O3:K6 (strain RIMD 2210633) protein is Ditrans,polycis-undecaprenyl-diphosphate synthase ((2E,6E)-farnesyl-diphosphate specific).